We begin with the raw amino-acid sequence, 365 residues long: MRVLSLFLKDFRNYTDLRLELGPEMNSIFGLNAQGKTNLLEALYILSLGRSFRTSRLTDAIRFGASHFFIEAVFSHKEVFHTLSIQVDKKGKKILFDGAPITKLSELVGLFPVILFSIKDIAIIEGSPSERRRFLDLLLAQASDKYTEHISLYHKALDQRNASIKAQNQKAISAWNSPLIAYGSLVAFLRNECTKKLNTIFQTLWDNTLKETLSLRYESSLITEESPTLNDIASNYYEQLRIANTKDLDLGYTMVGPHRDELLLTINDLPVAKFSSEGQKHSLLAVLRFAECVYLQEEFCIHPLLCMDDIHACLDQQRLDQLLQLSNSLGQVVTTSTICPDHRSTTSCIFHVTQAQVSLVAPQSL.

30 to 37 (GLNAQGKT) provides a ligand contact to ATP.

The protein belongs to the RecF family.

It is found in the cytoplasm. The RecF protein is involved in DNA metabolism; it is required for DNA replication and normal SOS inducibility. RecF binds preferentially to single-stranded, linear DNA. It also seems to bind ATP. This is DNA replication and repair protein RecF from Chlamydia trachomatis serovar L2b (strain UCH-1/proctitis).